Consider the following 268-residue polypeptide: Oxygen-evolving enhancer protein 2-1, chloroplastic (268 aa).

Residues 1 to 82 (MASTQCFLHQ…IGSKVSPADA (82 aa)) constitute a chloroplast transit peptide.

Belongs to the PsbP family.

The protein resides in the plastid. The protein localises to the chloroplast thylakoid membrane. In terms of biological role, may be involved in the regulation of photosystem II. The polypeptide is Oxygen-evolving enhancer protein 2-1, chloroplastic (PSBP1) (Nicotiana tabacum (Common tobacco)).